The sequence spans 795 residues: Phenylalanine--tRNA ligase beta subunit (795 aa).

The tRNA-binding domain maps to 39–148 (AGSFNGVVVG…ADAPLGTDIR (110 aa)). In terms of domain architecture, B5 spans 401–476 (PKRATITLRR…RVYGYNNIPD (76 aa)). 4 residues coordinate Mg(2+): Asp454, Asp460, Glu463, and Glu464. The 94-residue stretch at 701–794 (SRFPANRRDI…LKERFQASLR (94 aa)) folds into the FDX-ACB domain.

This sequence belongs to the phenylalanyl-tRNA synthetase beta subunit family. Type 1 subfamily. As to quaternary structure, tetramer of two alpha and two beta subunits. Mg(2+) serves as cofactor.

It localises to the cytoplasm. The catalysed reaction is tRNA(Phe) + L-phenylalanine + ATP = L-phenylalanyl-tRNA(Phe) + AMP + diphosphate + H(+). The polypeptide is Phenylalanine--tRNA ligase beta subunit (Salmonella choleraesuis (strain SC-B67)).